We begin with the raw amino-acid sequence, 147 residues long: Ribonuclease H (147 aa).

The RNase H type-1 domain maps to 1-142; that stretch reads MAGKVVMYTD…ADELANRGVR (142 aa). Mg(2+) is bound by residues D10, E48, D70, and D134.

The protein belongs to the RNase H family. In terms of assembly, monomer. Requires Mg(2+) as cofactor.

Its subcellular location is the cytoplasm. It catalyses the reaction Endonucleolytic cleavage to 5'-phosphomonoester.. Functionally, endonuclease that specifically degrades the RNA of RNA-DNA hybrids. The sequence is that of Ribonuclease H from Marinobacter nauticus (strain ATCC 700491 / DSM 11845 / VT8) (Marinobacter aquaeolei).